A 294-amino-acid polypeptide reads, in one-letter code: NADH-cytochrome b5 reductase 1 (294 aa).

The helical transmembrane segment at 13-33 (PHASFLGGLVVAAILGLFIFF) threads the bilayer. One can recognise an FAD-binding FR-type domain in the interval 44-147 (VEWRSFKLVD…KGPKGKFVYT (104 aa)). Residues 127–142 (SLLT…GPKG) and 153–185 (HLVM…RLSL) each bind FAD.

The protein belongs to the flavoprotein pyridine nucleotide cytochrome reductase family. Monomer. Component of the 2-(3-amino-3-carboxypropyl)histidine synthase complex composed of DPH1, DPH2, DPH3 and a NADH-dependent reductase, predominantly CBR1. Requires FAD as cofactor.

Its subcellular location is the mitochondrion outer membrane. It catalyses the reaction 2 Fe(III)-[cytochrome b5] + NADH = 2 Fe(II)-[cytochrome b5] + NAD(+) + H(+). The enzyme catalyses 2 Fe(3+)-[Dph3] + NADH = 2 Fe(2+)-[Dph3] + NAD(+) + H(+). It participates in protein modification; peptidyl-diphthamide biosynthesis. Functionally, NADH-dependent reductase for DPH3 and cytochrome b5. Required for the first step of diphthamide biosynthesis, a post-translational modification of histidine which occurs in elongation factor 2. DPH1 and DPH2 transfer a 3-amino-3-carboxypropyl (ACP) group from S-adenosyl-L-methionine (SAM) to a histidine residue, the reaction is assisted by a reduction system comprising DPH3 and a NADH-dependent reductase, predominantly CBR1. By reducing DPH3, also involved in the formation of the tRNA wobble base modification mcm5s 2U (5-methoxycarbonylmethyl-2-thiouridine), mediated by the elongator complex. The cytochrome b5/NADH cytochrome b5 reductase electron transfer system supports the catalytic activity of several sterol biosynthetic enzymes. The sequence is that of NADH-cytochrome b5 reductase 1 (CBR1) from Cryptococcus neoformans var. neoformans serotype D (strain B-3501A) (Filobasidiella neoformans).